The chain runs to 305 residues: Putative S-adenosyl-L-methionine-dependent methyltransferase MAB_4607c (305 aa).

S-adenosyl-L-methionine-binding positions include D128 and 155–156 (DL).

It belongs to the UPF0677 family.

Functionally, exhibits S-adenosyl-L-methionine-dependent methyltransferase activity. The sequence is that of Putative S-adenosyl-L-methionine-dependent methyltransferase MAB_4607c from Mycobacteroides abscessus (strain ATCC 19977 / DSM 44196 / CCUG 20993 / CIP 104536 / JCM 13569 / NCTC 13031 / TMC 1543 / L948) (Mycobacterium abscessus).